The following is a 990-amino-acid chain: Bifunctional glutamine synthetase adenylyltransferase/adenylyl-removing enzyme (990 aa).

The tract at residues Met1–Pro474 is adenylyl removase. The segment at Ala478 to Ala990 is adenylyl transferase.

The protein belongs to the GlnE family. The cofactor is Mg(2+).

It catalyses the reaction [glutamine synthetase]-O(4)-(5'-adenylyl)-L-tyrosine + phosphate = [glutamine synthetase]-L-tyrosine + ADP. It carries out the reaction [glutamine synthetase]-L-tyrosine + ATP = [glutamine synthetase]-O(4)-(5'-adenylyl)-L-tyrosine + diphosphate. Its function is as follows. Involved in the regulation of glutamine synthetase GlnA, a key enzyme in the process to assimilate ammonia. When cellular nitrogen levels are high, the C-terminal adenylyl transferase (AT) inactivates GlnA by covalent transfer of an adenylyl group from ATP to specific tyrosine residue of GlnA, thus reducing its activity. Conversely, when nitrogen levels are low, the N-terminal adenylyl removase (AR) activates GlnA by removing the adenylyl group by phosphorolysis, increasing its activity. The regulatory region of GlnE binds the signal transduction protein PII (GlnB) which indicates the nitrogen status of the cell. The protein is Bifunctional glutamine synthetase adenylyltransferase/adenylyl-removing enzyme of Rhodopseudomonas palustris (strain ATCC BAA-98 / CGA009).